The chain runs to 123 residues: Small ribosomal subunit protein uS12 (123 aa).

Asp-89 is subject to 3-methylthioaspartic acid. The disordered stretch occupies residues 102-123 (LDTSGVQDRRQRRSKYGAKRPK). Residues 111-123 (RQRRSKYGAKRPK) show a composition bias toward basic residues.

The protein belongs to the universal ribosomal protein uS12 family. Part of the 30S ribosomal subunit. Contacts proteins S8 and S17. May interact with IF1 in the 30S initiation complex.

With S4 and S5 plays an important role in translational accuracy. In terms of biological role, interacts with and stabilizes bases of the 16S rRNA that are involved in tRNA selection in the A site and with the mRNA backbone. Located at the interface of the 30S and 50S subunits, it traverses the body of the 30S subunit contacting proteins on the other side and probably holding the rRNA structure together. The combined cluster of proteins S8, S12 and S17 appears to hold together the shoulder and platform of the 30S subunit. In Lawsonia intracellularis (strain PHE/MN1-00), this protein is Small ribosomal subunit protein uS12.